The primary structure comprises 382 residues: Lipoyl synthase, mitochondrial (382 aa).

The transit peptide at 1-30 (MHGRRHLAASLARALTYAPSRSISSTPSLL) directs the protein to the mitochondrion. Polar residues predominate over residues 25 to 34 (STPSLLQTLD). Residues 25 to 47 (STPSLLQTLDPSTPSPAAAPPTA) are disordered. [4Fe-4S] cluster contacts are provided by Cys112, Cys117, Cys123, Cys143, Cys147, Cys150, and Ser359. A Radical SAM core domain is found at 128 to 348 (ETGTATATIM…RSLGVDMGFR (221 aa)).

It belongs to the radical SAM superfamily. Lipoyl synthase family. [4Fe-4S] cluster serves as cofactor.

The protein resides in the mitochondrion. The enzyme catalyses [[Fe-S] cluster scaffold protein carrying a second [4Fe-4S](2+) cluster] + N(6)-octanoyl-L-lysyl-[protein] + 2 oxidized [2Fe-2S]-[ferredoxin] + 2 S-adenosyl-L-methionine + 4 H(+) = [[Fe-S] cluster scaffold protein] + N(6)-[(R)-dihydrolipoyl]-L-lysyl-[protein] + 4 Fe(3+) + 2 hydrogen sulfide + 2 5'-deoxyadenosine + 2 L-methionine + 2 reduced [2Fe-2S]-[ferredoxin]. It participates in protein modification; protein lipoylation via endogenous pathway; protein N(6)-(lipoyl)lysine from octanoyl-[acyl-carrier-protein]: step 2/2. In terms of biological role, catalyzes the radical-mediated insertion of two sulfur atoms into the C-6 and C-8 positions of the octanoyl moiety bound to the lipoyl domains of lipoate-dependent enzymes, thereby converting the octanoylated domains into lipoylated derivatives. The sequence is that of Lipoyl synthase, mitochondrial from Oryza sativa subsp. indica (Rice).